The following is a 271-amino-acid chain: Formamidopyrimidine-DNA glycosylase (271 aa).

Pro2 functions as the Schiff-base intermediate with DNA in the catalytic mechanism. Glu3 (proton donor) is an active-site residue. Residue Lys57 is the Proton donor; for beta-elimination activity of the active site. Residues His90, Arg109, and Arg151 each coordinate DNA. An FPG-type zinc finger spans residues 236–270 (MVYGRAGEACVTCKTKLQEIRQSNRSSVFCPSCQQ). Arg260 (proton donor; for delta-elimination activity) is an active-site residue.

It belongs to the FPG family. In terms of assembly, monomer. The cofactor is Zn(2+).

It carries out the reaction Hydrolysis of DNA containing ring-opened 7-methylguanine residues, releasing 2,6-diamino-4-hydroxy-5-(N-methyl)formamidopyrimidine.. The enzyme catalyses 2'-deoxyribonucleotide-(2'-deoxyribose 5'-phosphate)-2'-deoxyribonucleotide-DNA = a 3'-end 2'-deoxyribonucleotide-(2,3-dehydro-2,3-deoxyribose 5'-phosphate)-DNA + a 5'-end 5'-phospho-2'-deoxyribonucleoside-DNA + H(+). Involved in base excision repair of DNA damaged by oxidation or by mutagenic agents. Acts as a DNA glycosylase that recognizes and removes damaged bases. Has a preference for oxidized purines, such as 7,8-dihydro-8-oxoguanine (8-oxoG). Has AP (apurinic/apyrimidinic) lyase activity and introduces nicks in the DNA strand. Cleaves the DNA backbone by beta-delta elimination to generate a single-strand break at the site of the removed base with both 3'- and 5'-phosphates. This chain is Formamidopyrimidine-DNA glycosylase, found in Colwellia psychrerythraea (strain 34H / ATCC BAA-681) (Vibrio psychroerythus).